The following is a 138-amino-acid chain: Single-stranded DNA-binding protein 4 (138 aa).

Residues methionine 1–glutamate 104 form the SSB domain. The tract at residues aspartate 107–phenylalanine 138 is disordered. The Important for interaction with partner proteins signature appears at aspartate 133–phenylalanine 138.

Homotetramer.

Its function is as follows. Plays an important role in DNA replication, recombination and repair. Binds to ssDNA and to an array of partner proteins to recruit them to their sites of action during DNA metabolism. The sequence is that of Single-stranded DNA-binding protein 4 (ssb4) from Streptococcus agalactiae serotype V (strain ATCC BAA-611 / 2603 V/R).